A 139-amino-acid polypeptide reads, in one-letter code: Transcription antitermination protein NusB (139 aa).

This sequence belongs to the NusB family.

Functionally, involved in transcription antitermination. Required for transcription of ribosomal RNA (rRNA) genes. Binds specifically to the boxA antiterminator sequence of the ribosomal RNA (rrn) operons. The protein is Transcription antitermination protein NusB of Edwardsiella ictaluri (strain 93-146).